The sequence spans 961 residues: Retinoblastoma-related protein 1 (961 aa).

Positions 404–606 (TPVSTAMTTA…EKGSSMYNSL (203 aa)) are domain A. Residues 404–819 (TPVSTAMTTA…NEMFIPSVKP (416 aa)) are pocket. Residues 607-728 (AVAKPSLAAE…PGGGGETCAE (122 aa)) are spacer. Residues 729-819 (TAINVFFGKI…NEMFIPSVKP (91 aa)) form a domain B region. The segment at 829 to 856 (NAEKNNHNDGQGPASPKPSPFPKLPDMS) is disordered.

The protein belongs to the retinoblastoma protein (RB) family.

It localises to the nucleus. Functionally, regulator of biological processes that recruits a histone deacetylase to control gene transcription. May play a role in the entry into mitosis, negatively regulating the cell proliferation. Formation of stable complexes with geminiviridae replication-associated proteins may create a cellular environment which favors viral DNA replication. This Nicotiana tabacum (Common tobacco) protein is Retinoblastoma-related protein 1 (RB1).